The primary structure comprises 467 residues: ATP-dependent protease ATPase subunit HslU (467 aa).

Residues Val22 and 64-69 contribute to the ATP site; that span reads GVGKTE. Residues 149–192 form a disordered region; it reads QTNNPLESLFGGAIPNFGQNNEDEEEPPTEEIKTKRSEIKRQLE. Residues 178-192 are compositionally biased toward basic and acidic residues; that stretch reads EEIKTKRSEIKRQLE. Residues Asp280, Glu345, and Arg417 each coordinate ATP.

This sequence belongs to the ClpX chaperone family. HslU subfamily. In terms of assembly, a double ring-shaped homohexamer of HslV is capped on each side by a ring-shaped HslU homohexamer. The assembly of the HslU/HslV complex is dependent on binding of ATP.

Its subcellular location is the cytoplasm. Its function is as follows. ATPase subunit of a proteasome-like degradation complex; this subunit has chaperone activity. The binding of ATP and its subsequent hydrolysis by HslU are essential for unfolding of protein substrates subsequently hydrolyzed by HslV. HslU recognizes the N-terminal part of its protein substrates and unfolds these before they are guided to HslV for hydrolysis. The chain is ATP-dependent protease ATPase subunit HslU from Staphylococcus aureus (strain MW2).